The primary structure comprises 177 residues: CCHC-type zinc finger nucleic acid binding protein (177 aa).

The residue at position 2 (S2) is an N-acetylserine. The CCHC-type 1 zinc finger occupies 4–21 (NECFKCGRSGHWARECPT). K8 is modified (N6-acetyllysine). An omega-N-methylarginine; by PRMT1 mark is found at R25 and R27. Residues 25–38 (RGRGMRSRGRGGFT) form an RNA-binding Arg/Gly-rich region (RGG-box) region. Omega-N-methylarginine occurs at positions 32 and 34. A Phosphoserine modification is found at S49. 6 CCHC-type zinc fingers span residues 52–69 (DICY…DCDL), 72–89 (DACY…DCKE), 96–113 (QCCY…DCDH), 117–134 (QKCY…DCTK), 135–152 (VKCY…NCSK), and 156–173 (VNCY…ECTI). 3 positions are modified to omega-N-methylarginine: A73, R79, and G80.

Associates with the 40S ribosomal subunit, the 80S ribosome and with polysomes. In terms of processing, arginine methylation by PRMT1 in the Arg/Gly-rich region impedes RNA binding. Expressed in the liver, kidney, spleen, testis, lung, muscle and adrenal glands.

Its subcellular location is the nucleus. It is found in the cytoplasm. The protein localises to the endoplasmic reticulum. In terms of biological role, single-stranded DNA-binding protein that preferentially binds to the sterol regulatory element (SRE) sequence 5'-GTGCGGTG-3', and thereby mediates transcriptional repression. Has a role as transactivator of the Myc promoter. Binds single-stranded RNA in a sequence-specific manner. Functionally, binds G-rich elements in target mRNA coding sequences. Prevents G-quadruplex structure formation in vitro, suggesting a role in supporting translation by resolving stable structures on mRNAs. Binds to RNA. In Homo sapiens (Human), this protein is CCHC-type zinc finger nucleic acid binding protein.